We begin with the raw amino-acid sequence, 481 residues long: Amino acid permease 6 (481 aa).

Residues 1–36 lie on the Cytoplasmic side of the membrane; the sequence is MEKKKSMFVEQSFPEHEIGDTNKNFDEDGRDKRTGT. Helical transmembrane passes span 37 to 57 and 58 to 78; these read WMTG…LSLA and WAIA…FSFI. Topologically, residues 79–125 are cytoplasmic; sequence TYFTSTMLADCYRSPDPVTGKRNYTYMEVVRSYLGGRKVQLCGLAQY. The chain crosses the membrane as a helical span at residues 126–146; that stretch reads GNLIGITIGYTITASISMVAV. At 147 to 167 the chain is on the extracellular side; the sequence is KRSNCFHKNGHNVKCATSNTP. Residues 168 to 188 form a helical membrane-spanning segment; sequence FMIIFAIIQIILSQIPNFHNL. Topologically, residues 189-190 are cytoplasmic; it reads SW. Residues 191–211 form a helical membrane-spanning segment; that stretch reads LSILAAVMSFCYASIGVGLSI. Topologically, residues 212 to 242 are extracellular; the sequence is AKAAGGGEHVRTTLTGVTVGIDVSGAEKIWR. A helical transmembrane segment spans residues 243–263; the sequence is TFQAIGDIAFAYAYSTVLIEI. At 264 to 283 the chain is on the cytoplasmic side; that stretch reads QDTLKAGPPSENKAMKRASL. Residues 284 to 304 traverse the membrane as a helical segment; it reads VGVSTTTFFYMLCGCVGYAAF. Topologically, residues 305–321 are extracellular; the sequence is GNDAPGNFLTGFGFYEP. The helical transmembrane segment at 322–342 threads the bilayer; it reads FWLIDFANVCIAVHLIGAYQV. The Cytoplasmic segment spans residues 343-385; the sequence is FCQPIFQFVESQSAKRWPDNKFITGEYKIHVPCCGDFSINFLR. Residues 386-405 form a helical membrane-spanning segment; sequence LVWRTSYVVVTAVVAMIFPF. The Extracellular portion of the chain corresponds to 406–408; that stretch reads FND. The chain crosses the membrane as a helical span at residues 409–427; it reads FLGLIGAASFWPLTVYFPI. At 428-447 the chain is on the cytoplasmic side; that stretch reads EMHIAQKKIPKFSFTWTWLK. Residues 448–468 traverse the membrane as a helical segment; that stretch reads ILSWTCFIVSLVAAAGSVQGL. The Extracellular segment spans residues 469-481; sequence IQSLKDFKPFQAP.

It belongs to the amino acid/polyamine transporter 2 family. Amino acid/auxin permease (AAAP) (TC 2.A.18.2) subfamily. Expressed in roots and leaves, and at lower levels in stems and flowers. Found in the xylem parenchyma.

The protein resides in the cell membrane. Functionally, amino acid-proton symporter. Stereospecific transporter with a broad specificity for tryptophan, proline, and neutral and acidic amino acids. Has an affinity for aspartate in a physiological range. Involved in the uptake of amino acids diffusing out of the xylem tracheids into the xylem parenchyma. The protein is Amino acid permease 6 (AAP6) of Arabidopsis thaliana (Mouse-ear cress).